The following is a 120-amino-acid chain: Large ribosomal subunit protein bL19 (120 aa).

It belongs to the bacterial ribosomal protein bL19 family.

In terms of biological role, this protein is located at the 30S-50S ribosomal subunit interface and may play a role in the structure and function of the aminoacyl-tRNA binding site. The protein is Large ribosomal subunit protein bL19 of Synechococcus sp. (strain ATCC 27144 / PCC 6301 / SAUG 1402/1) (Anacystis nidulans).